The sequence spans 788 residues: Endonuclease MutS2 (788 aa).

Position 334–341 (334–341 (GPNTGGKT)) interacts with ATP. The Smr domain occupies 713–788 (LDLRGQRYEE…GTGATIVYLQ (76 aa)).

This sequence belongs to the DNA mismatch repair MutS family. MutS2 subfamily. As to quaternary structure, homodimer. Binds to stalled ribosomes, contacting rRNA.

In terms of biological role, endonuclease that is involved in the suppression of homologous recombination and thus may have a key role in the control of bacterial genetic diversity. Functionally, acts as a ribosome collision sensor, splitting the ribosome into its 2 subunits. Detects stalled/collided 70S ribosomes which it binds and splits by an ATP-hydrolysis driven conformational change. Acts upstream of the ribosome quality control system (RQC), a ribosome-associated complex that mediates the extraction of incompletely synthesized nascent chains from stalled ribosomes and their subsequent degradation. Probably generates substrates for RQC. The sequence is that of Endonuclease MutS2 from Lactobacillus johnsonii (strain CNCM I-12250 / La1 / NCC 533).